Here is a 141-residue protein sequence, read N- to C-terminus: Hemoglobin subunit alpha (141 aa).

The Globin domain occupies 1 to 141 (VLSEADKSNV…VSTVLTSKYR (141 aa)). O2 is bound at residue His-58. Residue His-87 participates in heme b binding.

This sequence belongs to the globin family. In terms of assembly, heterotetramer of two alpha chains and two beta chains. When oxygenated in vitro, exists virtually only in polymeric form. When deoxygenated, forms tetramers, octamers and larger polymers. Red blood cells.

Functionally, involved in oxygen transport from the lung to the various peripheral tissues. The polypeptide is Hemoglobin subunit alpha (Paleosuchus palpebrosus (Cuvier's smooth-fronted caiman)).